The following is a 671-amino-acid chain: UBA domain-containing protein RUP1 (671 aa).

Residues 1–41 form the UBA domain; that stretch reads MMDNQAVKSLLEMGIPHEVAVDALQRTGGNLEAAVNFIFSN. Ser-56 carries the post-translational modification Phosphoserine. The interval 68-87 is disordered; the sequence is GTKPCDVPNNGDQDIDMPDV. A coiled-coil region spans residues 432-501; it reads SKRKQARTRS…LNSARAAKME (70 aa). The tract at residues 643–671 is disordered; the sequence is DGMGDPEQATNNINNGNDNDNDDDIDSDN. The segment covering 661–671 has biased composition (acidic residues); that stretch reads NDNDDDIDSDN.

In terms of assembly, forms a ternary complex with RSP5 and UBP2.

It localises to the cytoplasm. The protein localises to the nucleus. Modulates the activity of the RSP5 HECT ubiquitin-protein ligase through its mediation of the interaction between RSP5 and the deubiquitinase UBP2. Involved in regulation of cell wall homeostasis. The protein is UBA domain-containing protein RUP1 (RUP1) of Saccharomyces cerevisiae (strain ATCC 204508 / S288c) (Baker's yeast).